The sequence spans 451 residues: Vitamin D3 receptor (451 aa).

A DNA-binding region (nuclear receptor) is located at residues 44 to 112; it reads PRICGVCGDR…RLKRCVDIGM (69 aa). Residues Cys-47, Cys-50, Cys-64, Cys-67, Cys-83, Cys-89, Cys-99, and Cys-102 each coordinate Zn(2+). NR C4-type zinc fingers lie at residues 47–67 and 83–107; these read CGVC…CEGC and CPFN…LKRC. 2 hinge regions span residues 113–149 and 120–149; these read MKEF…KLSE and DEEV…KLSE. The NR LBD domain maps to 150–447; sequence EQQKVIDTLL…LTPLVLEVFG (298 aa). Ser-261 is a calcitriol binding site. The interval 270–288 is interaction with coactivator LXXLL motif; it reads KMIPGFRDLTAEDQIALLK. The calcitriol site is built by Arg-298, Ser-302, His-329, and His-421. The 9aaTAD signature appears at 440-448; the sequence is PLVLEVFGN.

It belongs to the nuclear hormone receptor family. NR1 subfamily. In terms of assembly, homodimer in the absence of bound vitamin D3. Heterodimer with RXRA after vitamin D3 binding. In terms of tissue distribution, expressed in kidney and intestine.

The protein resides in the nucleus. Its subcellular location is the cytoplasm. Its function is as follows. Nuclear receptor for calcitriol, the active form of vitamin D3 which mediates the action of this vitamin on cells. Enters the nucleus upon vitamin D3 binding where it forms heterodimers with the retinoid X receptor/RXR. The VDR-RXR heterodimers bind to specific response elements on DNA and activate the transcription of vitamin D3-responsive target genes. Plays a central role in calcium homeostasis. Also functions as a receptor for the secondary bile acid lithocholic acid (LCA) and its metabolites. This chain is Vitamin D3 receptor (VDR), found in Gallus gallus (Chicken).